The following is a 156-amino-acid chain: Cyanate hydratase (156 aa).

Catalysis depends on residues Arg-96, Glu-99, and Ser-122.

Belongs to the cyanase family.

The catalysed reaction is cyanate + hydrogencarbonate + 3 H(+) = NH4(+) + 2 CO2. Its function is as follows. Catalyzes the reaction of cyanate with bicarbonate to produce ammonia and carbon dioxide. This Burkholderia ambifaria (strain MC40-6) protein is Cyanate hydratase.